The primary structure comprises 982 residues: MAEGGVVDLETQRSEVSALLKTPLRRGDTWYLIDSRWFKQWKKYVGFDSWDKYQMGDQNVYPGPIDNSGLLKDTDTQSLKEHLIDELDYILLPTEGWNKLVSWYSVVESQQPIARKVVEQGMFVKHCKVEVYLTELKLCENGNMNNVVTRRFSKADTIDMIEKEMRTIFSIPDEKETRLWNKYMSNTFEPLNKPESTIQDAGLYQGQMLVIEQKNQEGQWPRGSMPKSSGIPNFSTLPKISPSSLSNNYNNFNSRIMKNSNYCLPSYAAYKNYEYSEPGRHNEQPGLCGLSNLGNTCFMNSAIQCLSNTPPLTEYFLNDKYQDELNMDNPLGMRGEIAKSYAELIKQMWSGKYSYVTPRAFKTQVGRFAPQFSGYQQQDCQELLAFLLDGLHEDLNRIRKKPYIQLKDADGRPDKVVAEEAWENHIKRNDSIIVDIFHGLFKSTLVCPECSKISVTFDPFCYLTLPLPMKKERALEVYLVRMDPLAKPMQYKVIVPKIGNIMDLCTALSSLSGIAPEKMVVTDIYNHRFHRIFAMDENLSSIMERDDIYVFETSINRTEDTEQVIIPVYLREKFRHTSYSHHHGSTLFGQPFLITVPRNITEDKLYNLLLLRMCRYVKATNDTEENDGSLHCNKEHTVNGNGPNGIHEEGSPSEMETDEPDDESSQDQELPSENENSQSEDSVGGDNDSENGLCTEDTCKGQSVTGQKKRLFTFQFSNLGSSDITYIKDDTKYIRFDERQLRLDERSYLALDWDPKLKKKFFDENAAEDFEKHESVDFTPQKKAFMKLKDCIELFTTKEKLGAEDPWYCPNCKEHQQATKKLDLWSLPPVLVVHLKRFSYSRYMRDKLDTLVDFPISDLDMSTFLINPNAGPCCYNLIAVSNHYGGMGGGHYTAFAKNKDDGKWYYFDDSSVSTASEEQIVSKAAYVLFYQRQDTITGTGFFPLDKEVKQGASAATGAPHESDEESNEDENDIENENCMHTN.

The DUSP domain occupies 7–118 (VDLETQRSEV…SQQPIARKVV (112 aa)). The region spanning 288 to 933 (CGLSNLGNTC…AAYVLFYQRQ (646 aa)) is the USP domain. Cys-297 serves as the catalytic Nucleophile. Residues 623 to 695 (TEENDGSLHC…DNDSENGLCT (73 aa)) form a disordered region. A compositionally biased stretch (acidic residues) spans 655 to 672 (METDEPDDESSQDQELPS). The Proton acceptor role is filled by His-891. The interval 950–982 (QGASAATGAPHESDEESNEDENDIENENCMHTN) is disordered. The segment covering 962–975 (SDEESNEDENDIEN) has biased composition (acidic residues).

This sequence belongs to the peptidase C19 family.

Its subcellular location is the cytoplasm. It is found in the nucleus. It carries out the reaction Thiol-dependent hydrolysis of ester, thioester, amide, peptide and isopeptide bonds formed by the C-terminal Gly of ubiquitin (a 76-residue protein attached to proteins as an intracellular targeting signal).. Functionally, hydrolase that removes conjugated ubiquitin from target proteins and regulates various pathways such as the TGF-beta receptor signaling and NF-kappa-B pathways. Acts as a key regulator of TGF-beta receptor signaling pathway, but the precise mechanism is still unclear: according to a report, acts by promoting deubiquitination of monoubiquitinated R-SMADs, thereby alleviating inhibition of R-SMADs and promoting activation of TGF-beta target genes. According to another reports, regulates the TGF-beta receptor signaling pathway by mediating deubiquitination and stabilization of tgfbr1, leading to an enhanced TGF-beta signal. May also regulate gene expression and/or DNA repair through the deubiquitination of histone H2B. Involved in endosome organization by mediating deubiquitination of rnf26 target(s), releasing vesicles that are restrained in the perinuclear region. The sequence is that of Ubiquitin carboxyl-terminal hydrolase 15 (usp15) from Xenopus tropicalis (Western clawed frog).